The primary structure comprises 186 residues: Tumor necrosis factor alpha-induced protein 8-like protein 1 (186 aa).

Belongs to the TNFAIP8 family.

It localises to the cytoplasm. The protein is Tumor necrosis factor alpha-induced protein 8-like protein 1 (TNFAIP8L1) of Gallus gallus (Chicken).